We begin with the raw amino-acid sequence, 434 residues long: Zinc finger CCCH domain-containing protein 10 (434 aa).

The disordered stretch occupies residues 1–37 (MPDRDSYANGTGSSGGGPGGGGSEEASGAGVGSGGAS). The span at 12-35 (GSSGGGPGGGGSEEASGAGVGSGG) shows a compositional bias: gly residues. 3 consecutive C3H1-type zinc fingers follow at residues 36–63 (ASSD…HPDM), 73–99 (KNEF…HGSK), and 134–161 (KEEV…HLQR). Omega-N-methylarginine occurs at positions 185 and 186. Residues 196 to 207 (PDRGFEDHEPGP) show a composition bias toward basic and acidic residues. The interval 196–217 (PDRGFEDHEPGPKRRRGGCCPP) is disordered. A coiled-coil region spans residues 234–280 (GVECRLLEEENAMLRKRVEELKKQVSNLLATNEVLLEQNAQFRNQAK). Positions 314–330 (TTLSSQALQPRPVSQQE) are enriched in polar residues. The interval 314–362 (TTLSSQALQPRPVSQQELVAPAGAPAAPPTNAAPPAAPPPPPPHLTPEI) is disordered. Residues 339–358 (AAPPTNAAPPAAPPPPPPHL) show a composition bias toward pro residues.

It is found in the nucleus. Functionally, specific regulator of miRNA biogenesis. Binds, via the C3H1-type zinc finger domains, to the binding motif 5'-GCAGCGC-3' on microRNA pri-MIR143 and negatively regulates the processing to mature microRNA. This Homo sapiens (Human) protein is Zinc finger CCCH domain-containing protein 10 (ZC3H10).